A 68-amino-acid chain; its full sequence is DNA-directed RNA polymerase subunit omega (68 aa).

This sequence belongs to the RNA polymerase subunit omega family. In terms of assembly, the RNAP catalytic core consists of 2 alpha, 1 beta, 1 beta' and 1 omega subunit. When a sigma factor is associated with the core the holoenzyme is formed, which can initiate transcription.

The enzyme catalyses RNA(n) + a ribonucleoside 5'-triphosphate = RNA(n+1) + diphosphate. Functionally, promotes RNA polymerase assembly. Latches the N- and C-terminal regions of the beta' subunit thereby facilitating its interaction with the beta and alpha subunits. The protein is DNA-directed RNA polymerase subunit omega of Listeria monocytogenes serotype 4b (strain CLIP80459).